The primary structure comprises 162 residues: Interleukin-15 (162 aa).

A signal peptide spans 1 to 29; the sequence is MRISKPHLRSISIQCYLCLLLNSHFLTEA. A propeptide spanning residues 30–48 is cleaved from the precursor; sequence GIHVFILGCFSAGLPKTEA. 2 disulfide bridges follow: cysteine 83/cysteine 133 and cysteine 90/cysteine 136. Asparagine 127 carries N-linked (GlcNAc...) asparagine glycosylation.

Belongs to the IL-15/IL-21 family. As to expression, most abundant in placenta and skeletal muscle. It is also detected in the heart, lung, liver and kidney. IL15-S21AA is preferentially expressed in tissues such as testis and thymus.

The protein resides in the secreted. Its subcellular location is the cytoplasm. It is found in the nucleus. Its function is as follows. Cytokine that plays a major role in the development of inflammatory and protective immune responses to microbial invaders and parasites by modulating immune cells of both the innate and adaptive immune systems. Stimulates the proliferation of natural killer cells, T-cells and B-cells and promotes the secretion of several cytokines. In monocytes, induces the production of IL8 and monocyte chemotactic protein 1/CCL2, two chemokines that attract neutrophils and monocytes respectively to sites of infection. Unlike most cytokines, which are secreted in soluble form, IL15 is expressed in association with its high affinity IL15RA on the surface of IL15-producing cells and delivers signals to target cells that express IL2RB and IL2RG receptor subunits. Binding to its receptor triggers the phosphorylation of JAK1 and JAK3 and the recruitment and subsequent phosphorylation of signal transducer and activator of transcription-3/STAT3 and STAT5. In mast cells, induces the rapid tyrosine phosphorylation of STAT6 and thereby controls mast cell survival and release of cytokines such as IL4. The chain is Interleukin-15 (IL15) from Homo sapiens (Human).